The chain runs to 1552 residues: Nonribosomal peptide synthetase acrB (1552 aa).

The interval 129–564 (ASFAQERIWF…PVANLAIFDE (436 aa)) is condensation. The interval 594 to 999 (RHCKAHPRDV…RMEGSAQVKI (406 aa)) is adenylation. The region spanning 1110–1186 (APLGVEEEVM…AMARLLQPQE (77 aa)) is the Carrier domain. An O-(pantetheine 4'-phosphoryl)serine modification is found at Ser-1146. The interval 1226 to 1464 (LTGATGFLGR…DFVGVDAVAS (239 aa)) is thiolester reductase (R) domain.

This sequence belongs to the NRP synthetase family.

It participates in secondary metabolite biosynthesis. Nonribosomal peptide synthetase; part of the cluster that mediates the biosynthesis of acurin A, a highly reduced polyketide coupled to a serine via a peptide bond. The activities of the highly reducing polyketide synthase acrA and the nonribosomal peptide synthetase acrB are collectively responsible for the synthesis of the acurin A core structure with a heptaketide backbone produced by acrA covalently fused to a L-serine by acrB. After the formation of the PK-NRP hybrid product, it is detached from acrB by reductive release to set up the formation of the lactam ring by aldol condensation. The hydrolyase acrC then catalyzes water loss to generate a double bond in the ring. This double bond is probably reduced, which is followed by three oxidations at C-22 to generate the carboxylic acid moiety, involving probably the FAD-binding monooxygenase acrE and the cytochrome P450 monooxygenases acrD and acrF. Finally, a last methylation step performed by the O-methyltransferase acrG leads to the production of acurin A. This chain is Nonribosomal peptide synthetase acrB, found in Aspergillus aculeatus (strain ATCC 16872 / CBS 172.66 / WB 5094).